The following is a 286-amino-acid chain: Zinc finger protein ZAT5 (286 aa).

Disordered stretches follow at residues 1–28, 40–60, and 131–171; these read MMMG…RSSS, STSS…EYNS, and GGHR…FKVS. The C2H2-type 1 zinc finger occupies 115 to 137; sequence YECKTCNRTFSSFQALGGHRASH. Positions 154 to 171 are enriched in polar residues; sequence QPKSSASEEGQNSHFKVS. The C2H2-type 2 zinc-finger motif lies at 190 to 212; sequence HECSICGSEFTSGQALGGHMRRH.

Expressed in flowers and siliques.

The protein localises to the nucleus. Probable transcription factor that may be involved in stress responses. This is Zinc finger protein ZAT5 (ZAT5) from Arabidopsis thaliana (Mouse-ear cress).